Here is a 395-residue protein sequence, read N- to C-terminus: Cytoplasmic 60S subunit biogenesis factor REI1 homolog 2 (395 aa).

4 C2H2-type zinc fingers span residues 4 to 28 (LACN…SEWH), 68 to 92 (YSCG…SKSH), 171 to 194 (ACCL…HKFH), and 222 to 249 (FVCL…AKGH).

It belongs to the REI1 family. In terms of assembly, can form homodimer. Interacts with RLP24, RLP24A, RPL24B, EBP1 and JJJ1.

It localises to the cytoplasm. Its function is as follows. Pre-60S-associated factor involved in the cytoplasmic maturation of the 60S subunit. Involved in the dissociation and recycling of other late pre-60S factors before newly synthesized large ribosomal subunits enter translation. Can complement the growth defect of a yeast mutant lacking REI1. Required for leaf growth under cold temperature conditions. The chain is Cytoplasmic 60S subunit biogenesis factor REI1 homolog 2 from Arabidopsis thaliana (Mouse-ear cress).